A 379-amino-acid chain; its full sequence is Cytochrome b (379 aa).

The next 4 membrane-spanning stretches (helical) occupy residues 33–53 (FGSLLGVCLMIQILTGLFLAM), 77–98 (WLIRYLHANGASMFFICLFIHV), 113–133 (WNIGIILFLTTMATAFVGYVL), and 178–198 (FFAFHFILPFIITAFVLVHLL). Residues H83 and H97 each coordinate heme b. Residues H182 and H196 each contribute to the heme b site. H201 is an a ubiquinone binding site. 4 helical membrane-spanning segments follow: residues 226–246 (IKDLLGILFLLMALMILALFF), 288–308 (LGGVLALLLSIIILAAFPLLN), 320–340 (VTQTIYWIFIANLLVLTWIGG), and 347–367 (FTMIGQIASVIYFATIIVLMP).

The protein belongs to the cytochrome b family. The cytochrome bc1 complex contains 11 subunits: 3 respiratory subunits (MT-CYB, CYC1 and UQCRFS1), 2 core proteins (UQCRC1 and UQCRC2) and 6 low-molecular weight proteins (UQCRH/QCR6, UQCRB/QCR7, UQCRQ/QCR8, UQCR10/QCR9, UQCR11/QCR10 and a cleavage product of UQCRFS1). This cytochrome bc1 complex then forms a dimer. Requires heme b as cofactor.

The protein resides in the mitochondrion inner membrane. Its function is as follows. Component of the ubiquinol-cytochrome c reductase complex (complex III or cytochrome b-c1 complex) that is part of the mitochondrial respiratory chain. The b-c1 complex mediates electron transfer from ubiquinol to cytochrome c. Contributes to the generation of a proton gradient across the mitochondrial membrane that is then used for ATP synthesis. The polypeptide is Cytochrome b (MT-CYB) (Akodon iniscatus (Intelligent grass mouse)).